A 257-amino-acid chain; its full sequence is tRNA dimethylallyltransferase (257 aa).

15–22 is an ATP binding site; the sequence is GPTASGKS. Substrate is bound at residue 17–22; that stretch reads TASGKS.

Belongs to the IPP transferase family. Monomer. Mg(2+) serves as cofactor.

The catalysed reaction is adenosine(37) in tRNA + dimethylallyl diphosphate = N(6)-dimethylallyladenosine(37) in tRNA + diphosphate. Functionally, catalyzes the transfer of a dimethylallyl group onto the adenine at position 37 in tRNAs that read codons beginning with uridine, leading to the formation of N6-(dimethylallyl)adenosine (i(6)A). The sequence is that of tRNA dimethylallyltransferase from Oenococcus oeni (strain ATCC BAA-331 / PSU-1).